Reading from the N-terminus, the 404-residue chain is uncharacterized protein (404 aa).

Positions 262–278 (VSTGDTSPYGTEDSSPA) are enriched in polar residues. Disordered stretches follow at residues 262–307 (VSTG…SPSL) and 320–340 (KKSHSANDSEEFFREDDGGAD). Residues serine 268, serine 276, and serine 279 each carry the phosphoserine modification. Phosphothreonine occurs at positions 290 and 293. Phosphoserine occurs at positions 304, 306, 324, 358, and 362. The segment covering 320–336 (KKSHSANDSEEFFREDD) has biased composition (basic and acidic residues).

This is an uncharacterized protein from Rattus norvegicus (Rat).